The following is a 207-amino-acid chain: LexA repressor (207 aa).

Positions R28 to K48 form a DNA-binding region, H-T-H motif. Active-site for autocatalytic cleavage activity residues include S124 and K161.

Belongs to the peptidase S24 family. In terms of assembly, homodimer.

The enzyme catalyses Hydrolysis of Ala-|-Gly bond in repressor LexA.. In terms of biological role, represses a number of genes involved in the response to DNA damage (SOS response), including recA and lexA. In the presence of single-stranded DNA, RecA interacts with LexA causing an autocatalytic cleavage which disrupts the DNA-binding part of LexA, leading to derepression of the SOS regulon and eventually DNA repair. The protein is LexA repressor of Shewanella amazonensis (strain ATCC BAA-1098 / SB2B).